We begin with the raw amino-acid sequence, 88 residues long: UPF0147 protein Ta0600 (88 aa).

This sequence belongs to the UPF0147 family.

This chain is UPF0147 protein Ta0600, found in Thermoplasma acidophilum (strain ATCC 25905 / DSM 1728 / JCM 9062 / NBRC 15155 / AMRC-C165).